The sequence spans 294 residues: 4-diphosphocytidyl-2-C-methyl-D-erythritol kinase (294 aa).

The active site involves Lys11. 93–103 (PFGAGLGGGSS) is an ATP binding site. Residue Asp135 is part of the active site.

It belongs to the GHMP kinase family. IspE subfamily.

The catalysed reaction is 4-CDP-2-C-methyl-D-erythritol + ATP = 4-CDP-2-C-methyl-D-erythritol 2-phosphate + ADP + H(+). It participates in isoprenoid biosynthesis; isopentenyl diphosphate biosynthesis via DXP pathway; isopentenyl diphosphate from 1-deoxy-D-xylulose 5-phosphate: step 3/6. Catalyzes the phosphorylation of the position 2 hydroxy group of 4-diphosphocytidyl-2C-methyl-D-erythritol. This Chlorobium phaeobacteroides (strain DSM 266 / SMG 266 / 2430) protein is 4-diphosphocytidyl-2-C-methyl-D-erythritol kinase.